The chain runs to 165 residues: Large ribosomal subunit protein uL10 (165 aa).

The protein belongs to the universal ribosomal protein uL10 family. In terms of assembly, part of the ribosomal stalk of the 50S ribosomal subunit. The N-terminus interacts with L11 and the large rRNA to form the base of the stalk. The C-terminus forms an elongated spine to which L12 dimers bind in a sequential fashion forming a multimeric L10(L12)X complex.

In terms of biological role, forms part of the ribosomal stalk, playing a central role in the interaction of the ribosome with GTP-bound translation factors. The polypeptide is Large ribosomal subunit protein uL10 (Shewanella halifaxensis (strain HAW-EB4)).